We begin with the raw amino-acid sequence, 606 residues long: Transmembrane 9 superfamily member 1 (606 aa).

The signal sequence occupies residues 1–27 (MTVLGYPRSWSCHCLPVLILLLGIGHG). An N-linked (GlcNAc...) asparagine glycan is attached at Asn-178. A run of 4 helical transmembrane segments spans residues 237–257 (LSII…AVIL), 310–330 (VLGV…MALL), 339–359 (GAIN…SGYV), and 373–393 (VWNI…TWSV). Asn-401 is a glycosylation site (N-linked (GlcNAc...) asparagine). Helical transmembrane passes span 412 to 432 (ILLL…IGGI), 469 to 489 (VGGF…FATV), 499 to 519 (GILF…SIAL), and 535 to 555 (SVLS…FYYA). An N-linked (GlcNAc...) asparagine glycan is attached at Asn-559. The chain crosses the membrane as a helical span at residues 570–590 (FGYSLLTGYVFFLMLGTISFF).

The protein belongs to the nonaspanin (TM9SF) (TC 9.A.2) family.

The protein resides in the lysosome membrane. Its subcellular location is the cytoplasmic vesicle. It is found in the autophagosome membrane. Its function is as follows. Plays an essential role in autophagy. The protein is Transmembrane 9 superfamily member 1 (Tm9sf1) of Mus musculus (Mouse).